Consider the following 325-residue polypeptide: Beta-ketoacyl-[acyl-carrier-protein] synthase III (325 aa).

Catalysis depends on residues Cys116 and His252. The ACP-binding stretch occupies residues 253-257 (QANLR). Asn282 is an active-site residue.

It belongs to the thiolase-like superfamily. FabH family. In terms of assembly, homodimer.

It localises to the cytoplasm. The catalysed reaction is malonyl-[ACP] + acetyl-CoA + H(+) = 3-oxobutanoyl-[ACP] + CO2 + CoA. It functions in the pathway lipid metabolism; fatty acid biosynthesis. Functionally, catalyzes the condensation reaction of fatty acid synthesis by the addition to an acyl acceptor of two carbons from malonyl-ACP. Catalyzes the first condensation reaction which initiates fatty acid synthesis and may therefore play a role in governing the total rate of fatty acid production. Possesses both acetoacetyl-ACP synthase and acetyl transacylase activities. Its substrate specificity determines the biosynthesis of branched-chain and/or straight-chain of fatty acids. This is Beta-ketoacyl-[acyl-carrier-protein] synthase III from Xanthomonas oryzae pv. oryzae (strain MAFF 311018).